We begin with the raw amino-acid sequence, 1637 residues long: Surface protein (1637 aa).

The N-terminal stretch at 1-48 is a signal peptide; that stretch reads MNKNSKKKLDFLPNKLNKYSIRRFTVGTASILVGATLIFGVANDQAEA. 3 disordered regions span residues 49 to 305, 689 to 719, and 739 to 1611; these read AENN…RTQV, VQKG…GEPT, and PQGH…NGTL. The span at 56–65 shows a compositional bias: basic and acidic residues; it reads KQDDSSDASK. Positions 69–83 are enriched in polar residues; sequence NVQTIEQSSANSNES. 3 stretches are compositionally biased toward basic and acidic residues: residues 90–106, 127–180, and 188–264; these read DVTK…EKAN, EAPK…KATT, and ETSK…KVET. Positions 289-298 are enriched in polar residues; that stretch reads AKSNSNAQPS. G5 domains follow at residues 654–737, 783–865, 911–993, 1039–1121, and 1167–1250; these read QADL…TPEE, HGPK…GGEE, and HGPK…APEI. The segment covering 779 to 817 has biased composition (basic and acidic residues); the sequence is DVTKHGPKAGEPEVTKEEIPFEKKREFNPDLKPGEEKVT. The segment covering 818–832 has biased composition (low complexity); the sequence is QEGQTGEKTTTTPTT. Over residues 907–945 the composition is skewed to basic and acidic residues; sequence DVTKHGPKAGEPEVTKEEIPFEKKREFNPDLKPGEEKVT. Residues 946 to 960 are compositionally biased toward low complexity; that stretch reads QEGQTGEKTTTTPTT. Residues 1035–1073 show a composition bias toward basic and acidic residues; sequence DVTKHGPKAGEPEVTKEEIPFEKKREFNPDLKPGEEKVT. The segment covering 1074 to 1088 has biased composition (low complexity); that stretch reads QEGQTGEKTTTTPTT. Basic and acidic residues predominate over residues 1163-1189; it reads DVTKHGPKAGEPEVTKEEIPYETKRVL. 2 stretches are compositionally biased toward acidic residues: residues 1282 to 1291 and 1302 to 1580; these read TGEIIEEPQD and SDAD…DSDS. A run of 141 repeats spans residues 1301 to 1302, 1303 to 1304, 1305 to 1306, 1307 to 1308, 1309 to 1310, 1311 to 1312, 1313 to 1314, 1315 to 1316, 1317 to 1318, 1319 to 1320, 1321 to 1322, 1323 to 1324, 1325 to 1326, 1327 to 1328, 1329 to 1330, 1331 to 1332, 1333 to 1334, 1335 to 1336, 1337 to 1338, 1339 to 1340, 1341 to 1342, 1343 to 1344, 1345 to 1346, 1347 to 1348, 1349 to 1350, 1351 to 1352, 1353 to 1354, 1355 to 1356, 1357 to 1358, 1359 to 1360, 1361 to 1362, 1363 to 1364, 1365 to 1366, 1367 to 1368, 1369 to 1370, 1371 to 1372, 1373 to 1374, 1375 to 1376, 1377 to 1378, 1379 to 1380, 1381 to 1382, 1383 to 1384, 1385 to 1386, 1387 to 1388, 1389 to 1390, 1391 to 1392, 1393 to 1394, 1395 to 1396, 1397 to 1398, 1399 to 1400, 1401 to 1402, 1403 to 1404, 1405 to 1406, 1407 to 1408, 1409 to 1410, 1411 to 1412, 1413 to 1414, 1415 to 1416, 1417 to 1418, 1419 to 1420, 1421 to 1422, 1423 to 1424, 1425 to 1426, 1427 to 1428, 1429 to 1430, 1431 to 1432, 1433 to 1434, 1435 to 1436, 1437 to 1438, 1439 to 1440, 1441 to 1442, 1443 to 1444, 1445 to 1446, 1447 to 1448, 1449 to 1450, 1451 to 1452, 1453 to 1454, 1455 to 1456, 1457 to 1458, 1459 to 1460, 1461 to 1462, 1463 to 1464, 1465 to 1466, 1467 to 1468, 1469 to 1470, 1471 to 1472, 1473 to 1474, 1475 to 1476, 1477 to 1478, 1479 to 1480, 1481 to 1482, 1483 to 1484, 1485 to 1486, 1487 to 1488, 1489 to 1490, 1491 to 1492, 1493 to 1494, 1495 to 1496, 1497 to 1498, 1499 to 1500, 1501 to 1502, 1503 to 1504, 1505 to 1506, 1507 to 1508, 1509 to 1510, 1511 to 1512, 1513 to 1514, 1515 to 1516, 1517 to 1518, 1519 to 1520, 1521 to 1522, 1523 to 1524, 1525 to 1526, 1527 to 1528, 1529 to 1530, 1531 to 1532, 1533 to 1534, 1535 to 1536, 1537 to 1538, 1539 to 1540, 1541 to 1542, 1543 to 1544, 1545 to 1546, 1547 to 1548, 1549 to 1550, 1551 to 1552, 1553 to 1554, 1555 to 1556, 1557 to 1558, 1559 to 1560, 1561 to 1562, 1563 to 1564, 1565 to 1566, 1567 to 1568, 1569 to 1570, 1571 to 1572, 1573 to 1574, 1575 to 1576, 1577 to 1578, 1579 to 1580, and 1581 to 1582. The interval 1301 to 1582 is 141 X 2 AA tandem repeats of D-[SAG]; the sequence is DSDADSDSDA…DSDSDSDSDA (282 aa). A compositionally biased stretch (basic and acidic residues) spans 1581-1599; it reads DADRDHNDKTDKPNNKELP. The LPXTG sorting signal motif lies at 1598 to 1602; sequence LPDTG. T1601 is modified (pentaglycyl murein peptidoglycan amidated threonine). The propeptide at 1602-1637 is removed by sortase; it reads GNDAQNNGTLFGSLFAALGGLFLVGRRRKNKNNEEK.

The protein localises to the secreted. It is found in the cell wall. Could have a role in preventing adhesion at some stages during an infection. This Staphylococcus aureus protein is Surface protein (pls).